The sequence spans 349 residues: tRNA N6-adenosine threonylcarbamoyltransferase (349 aa).

Histidine 115 and histidine 119 together coordinate Fe cation. Residues 137 to 141 (LASGG), aspartate 170, glycine 183, and asparagine 281 each bind substrate. Aspartate 309 contacts Fe cation.

It belongs to the KAE1 / TsaD family. It depends on Fe(2+) as a cofactor.

It localises to the cytoplasm. It carries out the reaction L-threonylcarbamoyladenylate + adenosine(37) in tRNA = N(6)-L-threonylcarbamoyladenosine(37) in tRNA + AMP + H(+). In terms of biological role, required for the formation of a threonylcarbamoyl group on adenosine at position 37 (t(6)A37) in tRNAs that read codons beginning with adenine. Is involved in the transfer of the threonylcarbamoyl moiety of threonylcarbamoyl-AMP (TC-AMP) to the N6 group of A37, together with TsaE and TsaB. TsaD likely plays a direct catalytic role in this reaction. In Methylobacterium nodulans (strain LMG 21967 / CNCM I-2342 / ORS 2060), this protein is tRNA N6-adenosine threonylcarbamoyltransferase.